The sequence spans 239 residues: MAHITRFETPWFLVISKKQYKWTVRPNAGPHPIEKSIPLAVVIRDYLKLAETVREAKHIIFDGKVLVDGKVRKDYKYPVGLMDIVSIPSADLYFRVIPDNVRFMRLSKISADEAHYKYVRIMNKTTVKGGSIQLNLEDGRNILVDKETAKSFKTLMTLKIELPSQNIVDSFIISEGSYAIFVGGKNVGIHGVVKNINLSKFKSRKYSVITLESKDGNTYQTNLMNVMSIGREKSDMRVD.

The S4 RNA-binding domain maps to 37 to 99 (IPLAVVIRDY…ADLYFRVIPD (63 aa)).

This sequence belongs to the eukaryotic ribosomal protein eS4 family.

This is Small ribosomal subunit protein eS4 from Saccharolobus islandicus (strain Y.N.15.51 / Yellowstone #2) (Sulfolobus islandicus).